The following is a 326-amino-acid chain: Meso-diaminopimelate D-dehydrogenase (326 aa).

Residues 11 to 14, 35 to 37, 69 to 72, 92 to 94, and 121 to 125 each bind NADP(+); these read YGNL, TRR, CGGS, SFD, and VGWDP. Substrate is bound by residues D94, D124, W148, 154 to 155, T173, R199, H249, and N276; that span reads QG.

Belongs to the diaminopimelate dehydrogenase family. Homodimer.

It carries out the reaction meso-2,6-diaminopimelate + NADP(+) + H2O = (S)-2-amino-6-oxoheptanedioate + NH4(+) + NADPH + H(+). It functions in the pathway amino-acid biosynthesis; L-lysine biosynthesis via DAP pathway; DL-2,6-diaminopimelate from (S)-tetrahydrodipicolinate: step 1/1. Its activity is regulated as follows. L,L-2,6-diaminopimelate, D,D-2,6-diaminopimelate and meso-2,5-diaminoadipate competitively inhibit the oxidation of meso-2,6-diaminopimelate. L-2-amino-6-methylene-pimelate is also a potent competitive inhibitor (5 uM) of this reaction. Glyoxylate inhibits the reductive amination of L-2-amino-6-oxopimelate about 30%. The enzyme is inhibited completely by p-chloromercuribenzoate and HgCl(2) in vitro. In terms of biological role, catalyzes the reversible NADPH-dependent reductive amination of L-2-amino-6-oxopimelate, the acyclic form of L-tetrahydrodipicolinate, to generate the meso compound, D,L-2,6-diaminopimelate. Probably plays a role in lysine biosynthesis. Exhibits a high substrate specificity, since alpha-ketoglutarate, pyruvate, oxaloacetate, glyoxylate, alpha-ketobutyrate, alpha-ketovalerate, alpha-ketocaproate, alpha-ketoisocaproate, alpha-ketoisovalerate, and phenylpyruvate are not substrates for the reductive amination reaction, and L,L-2,6-diaminopimelate, D,D-2,6-diaminopimelate, DL-alpha-aminopimelate, meso- and DL-2,5-diaminoadipate, L-djenkolate, L-cystine, L-lysine, S-(beta-aminoethy1)-L-homocysteine, L-ornithine, L-arginine, L-alpha,gamma-diaminobutyrate, L-histidine, L-phenylalanine, L-tyrosine, L-glutamate, L-aspartate, L-leucine, L-valine, L-methionine, L-serine, L-alanine, L-alpha-aminobutyrate, D-lysine, D-glutamate, D-leucine, D-alanine, D-phenylalanine, epsilon-aminocaproate, 7-aminoheptanoate, and 8-aminooctanoate are not substrates for the oxidative deamination reaction. Cannot use NAD(+) or NAD(+) analogs instead of NADP(+) for the oxidative deamination reaction. The chain is Meso-diaminopimelate D-dehydrogenase (dapdh) from Lysinibacillus sphaericus (Bacillus sphaericus).